We begin with the raw amino-acid sequence, 257 residues long: Transcription factor bHLH55 (257 aa).

Positions 74–126 constitute a bHLH domain; the sequence is NKRAKHKELERQRRQENTSLFKILRYLLPSQYIKGKRSSADHVLEAVNYIKDL.

As to quaternary structure, homodimer. As to expression, expressed in roots, leaves, stems, and flowers.

Its subcellular location is the nucleus. In Arabidopsis thaliana (Mouse-ear cress), this protein is Transcription factor bHLH55 (BHLH55).